Consider the following 278-residue polypeptide: Trehalose/maltose transport system permease protein MalG (278 aa).

A run of 6 helical transmembrane segments spans residues 12–32 (IIGA…MIVV), 74–94 (IIIA…AAYA), 106–126 (IPIF…GYLF), 141–161 (LYFP…LSYF), 186–206 (IILP…FIAA), and 242–262 (GSVM…ALLF). The ABC transmembrane type-1 domain occupies 70-262 (LKNSIIIASL…IPLVIMALLF (193 aa)).

Belongs to the binding-protein-dependent transport system permease family. As to quaternary structure, the complex is composed of two ATP-binding proteins (MalK), two transmembrane proteins (MalG and MalF) and a solute-binding protein (MalE).

The protein localises to the cell membrane. Part of the ABC transporter complex MalEFGK involved in trehalose/maltose import. Responsible for the translocation of the substrate across the membrane. The sequence is that of Trehalose/maltose transport system permease protein MalG (malG) from Thermococcus litoralis (strain ATCC 51850 / DSM 5473 / JCM 8560 / NS-C).